The following is a 451-amino-acid chain: Enolase (451 aa).

Q163 is a (2R)-2-phosphoglycerate binding site. E205 functions as the Proton donor in the catalytic mechanism. 3 residues coordinate Mg(2+): D258, E308, and D335. The (2R)-2-phosphoglycerate site is built by K360, R389, S390, and K411. The active-site Proton acceptor is the K360.

It belongs to the enolase family. It depends on Mg(2+) as a cofactor.

It is found in the cytoplasm. The protein localises to the secreted. It localises to the cell surface. It carries out the reaction (2R)-2-phosphoglycerate = phosphoenolpyruvate + H2O. It functions in the pathway carbohydrate degradation; glycolysis; pyruvate from D-glyceraldehyde 3-phosphate: step 4/5. In terms of biological role, catalyzes the reversible conversion of 2-phosphoglycerate (2-PG) into phosphoenolpyruvate (PEP). It is essential for the degradation of carbohydrates via glycolysis. The protein is Enolase of Mycoplasma mycoides subsp. mycoides SC (strain CCUG 32753 / NCTC 10114 / PG1).